The following is a 745-amino-acid chain: Chitin synthase D (745 aa).

A run of 5 helical transmembrane segments spans residues 26 to 46 (LAHR…PVHL), 55 to 75 (VLML…IPWL), 412 to 432 (TTAL…SSIN), 434 to 454 (LPVG…FYLG), and 464 to 484 (LFPL…VYGI). Disordered stretches follow at residues 613–635 (TGDN…SLHQ) and 672–745 (ILPH…ESMV). The span at 707–720 (NASTRGSMEGNTPE) shows a compositional bias: polar residues.

It belongs to the chitin synthase family. Class VI subfamily.

It localises to the cell membrane. The enzyme catalyses [(1-&gt;4)-N-acetyl-beta-D-glucosaminyl](n) + UDP-N-acetyl-alpha-D-glucosamine = [(1-&gt;4)-N-acetyl-beta-D-glucosaminyl](n+1) + UDP + H(+). Functionally, polymerizes chitin, a structural polymer of the cell wall and septum, by transferring the sugar moiety of UDP-GlcNAc to the non-reducing end of the growing chitin polymer. This Aspergillus fumigatus (strain ATCC MYA-4609 / CBS 101355 / FGSC A1100 / Af293) (Neosartorya fumigata) protein is Chitin synthase D (chsD).